The sequence spans 613 residues: Spastin (613 aa).

Positions 1–42 (MNSPGGRGKKKGSAGSSSAPPAAGASPSAPSGPAPPAPPAGA) are disordered. Over 1 to 61 (MNSPGGRGKK…KRNLYYFSYP (61 aa)) the chain is Cytoplasmic. Residues 13–29 (SAGSSSAPPAAGASPSA) show a composition bias toward low complexity. Residues 30–39 (PSGPAPPAPP) show a composition bias toward pro residues. The segment at residues 62 to 82 (LFAAFALLRFVAFQLGLLVAW) is an intramembrane region (helical). The Cytoplasmic portion of the chain corresponds to 83-613 (LCERLSRGAL…WNKDFGDTTV (531 aa)). An MIT domain is found at 117–192 (HKRAFECISM…AMAKDRLQLL (76 aa)). The segment at 224 to 312 (SESGAVPKKK…PAARKKKDTK (89 aa)) is disordered. Composition is skewed to polar residues over residues 237–257 (THTS…STGL), 264–274 (PSYSGISTASV), and 281–299 (PATS…NKPS). An ATP-binding site is contributed by 379-386 (GPPGNGKT).

The protein belongs to the AAA ATPase family. Spastin subfamily. As to quaternary structure, homohexamer. The homohexamer is stabilized by ATP-binding. The homohexamer may adopt a ring conformation through which microtubules pass prior to being severed. Interacts with microtubules.

It localises to the membrane. The protein localises to the cytoplasm. The protein resides in the cytoskeleton. Its subcellular location is the microtubule organizing center. It is found in the centrosome. It localises to the perinuclear region. The protein localises to the nucleus. It catalyses the reaction n ATP + n H2O + a microtubule = n ADP + n phosphate + (n+1) alpha/beta tubulin heterodimers.. Its function is as follows. ATP-dependent microtubule severing protein that specifically recognizes and cuts microtubules that are polyglutamylated. Preferentially recognizes and acts on microtubules decorated with short polyglutamate tails: severing activity increases as the number of glutamates per tubulin rises from one to eight, but decreases beyond this glutamylation threshold. Microtubule severing promotes reorganization of cellular microtubule arrays and the release of microtubules from the centrosome following nucleation. Required for membrane traffic from the endoplasmic reticulum (ER) to the Golgi and for completion of the abscission stage of cytokinesis. Also plays a role in axon growth and the formation of axonal branches. The polypeptide is Spastin (Gallus gallus (Chicken)).